The chain runs to 591 residues: MSEQSICQARAAVMVYDDANKKWVPAGGSTGFSRVHIYHHTGNNTFRVVGRKIQDHQVVINCAIPKGLKYNQATQTFHQWRDARQVYGLNFGSKEDANVFASAMMHALEVLNSQETGPTLPRQNSQLPAQVQNGPSQEELEIQRRQLQEQQRQKELERERLERERMERERLERERLERERLERERLEQEQLERERQERERQERLERQERLERQERLERQERLDRERQERQERERLERLERERQERERQEQLEREQLEWERERRISSAAAPASVETPLNSVLGDSSASEPGLQAASQPAETPSQQGIVLGPLAPPPPPPLPPGPAQASVALPPPPGPPPPPPLPSTGPPPPPPPPPLPNQVPPPPPPPPAPPLPASGFFLASMSEDNRPLTGLAAAIAGAKLRKVSRMEDTSFPSGGNAIGVNSASSKTDTGRGNGPLPLGGSGLMEEMSALLARRRRIAEKGSTIETEQKEDKGEDSEPVTSKASSTSTPEPTRKPWERTNTMNGSKSPVISRRDSPRKNQIVFDNRSYDSLHRPKSTPLSQPSANGVQTEGLDYDRLKQDILDEMRKELTKLKEELIDAIRQELSKSNTA.

The region spanning 1 to 111 (MSEQSICQAR…SAMMHALEVL (111 aa)) is the WH1 domain. The segment covering 115–136 (ETGPTLPRQNSQLPAQVQNGPS) has biased composition (polar residues). The disordered stretch occupies residues 115 to 146 (ETGPTLPRQNSQLPAQVQNGPSQEELEIQRRQ). Serine 125 is subject to Phosphoserine. Residues 135 to 265 (PSQEELEIQR…LEWERERRIS (131 aa)) adopt a coiled-coil conformation. 9 tandem repeats follow at residues 156 to 160 (LERER), 161 to 165 (LERER), 166 to 170 (MERER), 171 to 175 (LERER), 176 to 180 (LERER), 181 to 185 (LERER), 186 to 190 (LEQEQ), 191 to 195 (LERER), and 196 to 200 (QERER). The 9 X 5 AA tandem repeats of [LMQ]-E-[QR]-E-[QR] stretch occupies residues 156–200 (LERERLERERMERERLERERLERERLERERLEQEQLERERQERER). The segment covering 221–264 (RLDRERQERQERERLERLERERQERERQEQLEREQLEWERERRI) has biased composition (basic and acidic residues). The interval 221–379 (RLDRERQERQ…PPLPASGFFL (159 aa)) is disordered. Serine 265 is subject to Phosphoserine; by PKA. Over residues 275–305 (TPLNSVLGDSSASEPGLQAASQPAETPSQQG) the composition is skewed to polar residues. Pro residues-rich tracts occupy residues 311 to 323 (LAPPPPPPLPPGP) and 330 to 373 (LPPP…PPLP). The tract at residues 391–411 (GLAAAIAGAKLRKVSRMEDTS) is EVH2 block A. The tract at residues 391 to 588 (GLAAAIAGAK…DAIRQELSKS (198 aa)) is EVH2. The short motif at 400-403 (KLRK) is the KLKR element. A disordered region spans residues 405-549 (SRMEDTSFPS…LSQPSANGVQ (145 aa)). Residues 432–443 (RGNGPLPLGGSG) show a composition bias toward gly residues. Residues 442–459 (SGLMEEMSALLARRRRIA) form an EVH2 block B region. Isoleucine 465 carries the post-translational modification Phosphothreonine. A phosphoserine mark is found at glutamate 471 and glutamate 475. Composition is skewed to polar residues over residues 479-491 (PVTSKASSTSTPE) and 499-509 (RTNTMNGSKSP). Threonine 502 carries the post-translational modification Phosphothreonine. Residues serine 506, serine 508, and serine 512 each carry the phosphoserine modification. The segment covering 538–549 (TPLSQPSANGVQ) has biased composition (polar residues). The interval 554 to 588 (DYDRLKQDILDEMRKELTKLKEELIDAIRQELSKS) is EVH2 block C. The stretch at 557 to 587 (RLKQDILDEMRKELTKLKEELIDAIRQELSK) forms a coiled coil.

This sequence belongs to the Ena/VASP family. Homotetramer. Interacts with APBB1IP, APBB1, PFN1 and ROBO4. Isoforms, containing the polyproline-rich regions with PPLP motifs, bind the WW domain of APBB1IP. Isoforms, containing the PPSY motif, bind, in vitro, to the WW2 and WW3 domains of NEDD4 and to the WW1 domain of YAP1. Binds the SH3 domain of BAIAP2-alpha but only after the autoinhibitory region of BAIAP2-alpha has been blocked by interaction with CDC42. Interacts, via the EVH1/WH1 domain, with the Pro-rich domains from VCL, ZYX and Listeria monocytogenes actA and with TES (via LIM domains). The TES LIM domain and the Pro-rich domains from VCL or ZYX compete for the same binding site. Interaction with ZYX is important for targeting ENAH to focal adhesions and enhances production of actin-rich structures at the apical surface of cells. Interacts, through the Pro-rich region, with the C-terminal SH3 domain of DNMPB. Binds GPHN. Interacts with FAT1 (via EVH1 domains). Heterotrimer with TES and ACTL7A. Interacts with PRPF40A. Post-translationally, NTN1-induced PKA phosphorylation on Ser-265 directly parallels the formation of filopodial protrusions. As to expression, expressed in myoepithelia of parotid, breast, bronchial glands and sweat glands. Expressed in colon-rectum muscolaris mucosae epithelium, pancreas acinar ductal epithelium, endometrium epithelium, prostate fibromuscolar stroma and placenta vascular media. Overexpressed in a majority of breast cancer cell lines and primary breast tumor lesions.

It localises to the cytoplasm. The protein resides in the cytoskeleton. The protein localises to the cell projection. It is found in the lamellipodium. Its subcellular location is the filopodium. It localises to the synapse. The protein resides in the cell junction. The protein localises to the focal adhesion. In terms of biological role, ena/VASP proteins are actin-associated proteins involved in a range of processes dependent on cytoskeleton remodeling and cell polarity such as axon guidance and lamellipodial and filopodial dynamics in migrating cells. ENAH induces the formation of F-actin rich outgrowths in fibroblasts. Acts synergistically with BAIAP2-alpha and downstream of NTN1 to promote filipodia formation. This is Protein enabled homolog (ENAH) from Homo sapiens (Human).